Here is a 358-residue protein sequence, read N- to C-terminus: Nuclease EXOG, mitochondrial (358 aa).

Residue His-132 is the Proton acceptor of the active site. Asn-163 contributes to the a divalent metal cation binding site.

The protein belongs to the DNA/RNA non-specific endonuclease family. As to quaternary structure, homodimer. A divalent metal cation is required as a cofactor.

The protein resides in the mitochondrion inner membrane. In terms of biological role, endo/exonuclease with nicking activity towards supercoiled DNA, a preference for single-stranded DNA and 5'-3' exonuclease activity. This is Nuclease EXOG, mitochondrial (exog) from Xenopus laevis (African clawed frog).